A 225-amino-acid chain; its full sequence is Phosphoribosylformylglycinamidine synthase subunit PurQ (225 aa).

The 220-residue stretch at 6 to 225 (FGVVVFPGSN…WQSILRSFAA (220 aa)) folds into the Glutamine amidotransferase type-1 domain. The Nucleophile role is filled by C89. Residues H198 and E200 contribute to the active site.

Part of the FGAM synthase complex composed of 1 PurL, 1 PurQ and 2 PurS subunits.

The protein resides in the cytoplasm. The catalysed reaction is N(2)-formyl-N(1)-(5-phospho-beta-D-ribosyl)glycinamide + L-glutamine + ATP + H2O = 2-formamido-N(1)-(5-O-phospho-beta-D-ribosyl)acetamidine + L-glutamate + ADP + phosphate + H(+). It catalyses the reaction L-glutamine + H2O = L-glutamate + NH4(+). Its pathway is purine metabolism; IMP biosynthesis via de novo pathway; 5-amino-1-(5-phospho-D-ribosyl)imidazole from N(2)-formyl-N(1)-(5-phospho-D-ribosyl)glycinamide: step 1/2. Its function is as follows. Part of the phosphoribosylformylglycinamidine synthase complex involved in the purines biosynthetic pathway. Catalyzes the ATP-dependent conversion of formylglycinamide ribonucleotide (FGAR) and glutamine to yield formylglycinamidine ribonucleotide (FGAM) and glutamate. The FGAM synthase complex is composed of three subunits. PurQ produces an ammonia molecule by converting glutamine to glutamate. PurL transfers the ammonia molecule to FGAR to form FGAM in an ATP-dependent manner. PurS interacts with PurQ and PurL and is thought to assist in the transfer of the ammonia molecule from PurQ to PurL. The chain is Phosphoribosylformylglycinamidine synthase subunit PurQ from Synechococcus sp. (strain JA-2-3B'a(2-13)) (Cyanobacteria bacterium Yellowstone B-Prime).